The primary structure comprises 1023 residues: Phosphoenolpyruvate carboxylase (1023 aa).

Residues histidine 199 and lysine 669 contribute to the active site.

This sequence belongs to the PEPCase type 1 family. Mg(2+) is required as a cofactor.

The enzyme catalyses oxaloacetate + phosphate = phosphoenolpyruvate + hydrogencarbonate. Functionally, forms oxaloacetate, a four-carbon dicarboxylic acid source for the tricarboxylic acid cycle. This chain is Phosphoenolpyruvate carboxylase, found in Trichormus variabilis (strain ATCC 29413 / PCC 7937) (Anabaena variabilis).